Reading from the N-terminus, the 358-residue chain is Methylthioribose-1-phosphate isomerase (358 aa).

Substrate-binding positions include 54 to 56 (RGA), Arg-96, and Gln-205. Asp-246 serves as the catalytic Proton donor. 256–257 (NK) is a substrate binding site.

This sequence belongs to the eIF-2B alpha/beta/delta subunits family. MtnA subfamily.

It carries out the reaction 5-(methylsulfanyl)-alpha-D-ribose 1-phosphate = 5-(methylsulfanyl)-D-ribulose 1-phosphate. Its pathway is amino-acid biosynthesis; L-methionine biosynthesis via salvage pathway; L-methionine from S-methyl-5-thio-alpha-D-ribose 1-phosphate: step 1/6. Its function is as follows. Catalyzes the interconversion of methylthioribose-1-phosphate (MTR-1-P) into methylthioribulose-1-phosphate (MTRu-1-P). The polypeptide is Methylthioribose-1-phosphate isomerase (Stutzerimonas stutzeri (strain A1501) (Pseudomonas stutzeri)).